Consider the following 632-residue polypeptide: U-box domain-containing protein 14 (632 aa).

In terms of domain architecture, U-box spans 247–321; sequence VIPEYFRCPI…ALWCESNGIE (75 aa). ARM repeat units follow at residues 377–416, 418–457, 459–498, 500–539, and 541–580; these read VDNRVCIAEAGAIPLLVELLSSPDPRTQEHSVTALLNLSI, EGNKGAIVDAGAITDIVEVLKNGSMEARENAAATLFSLSV, DENKVAIGAAGAIQALISLLEEGTRRGKKDAATAIFNLCI, QGNKSRAVKGGIVDPLTRLLKDAGGGMVDEALAILAILST, and QEGKTAIAEAESIPVLVEIIRTGSPRNRENAAAILWYLCI.

In terms of assembly, homodimer. Interacts with SNL1. Binds to SD11, SD16, SD17, SD18, SD113, SD129 and SD25. In terms of tissue distribution, expressed in flowers, green siliques, seeds and rosette leaves.

It catalyses the reaction S-ubiquitinyl-[E2 ubiquitin-conjugating enzyme]-L-cysteine + [acceptor protein]-L-lysine = [E2 ubiquitin-conjugating enzyme]-L-cysteine + N(6)-ubiquitinyl-[acceptor protein]-L-lysine.. It participates in protein modification; protein ubiquitination. In terms of biological role, functions as an E3 ubiquitin ligase with specific E2 ubiquitin-conjugating enzymes. Undergoes auto-ubiquitination. This chain is U-box domain-containing protein 14 (PUB14), found in Arabidopsis thaliana (Mouse-ear cress).